The following is a 597-amino-acid chain: Period protein homolog lin-42 (597 aa).

The tract at residues 1–44 (MEPAGHSSATHNIVVPNANPTQPQPLAPAMREEGATLSPPNTWS) is disordered. The PAS domain maps to 155-223 (LQASHVSSNF…VRQAHIDLHN (69 aa)). Disordered regions lie at residues 313 to 335 (PVPS…QNQG), 418 to 450 (KSQS…EALT), 473 to 509 (DDVP…PPPG), and 555 to 597 (DGLL…DSQN). Residues 425–438 (SPAKQDEPFDEKKY) are compositionally biased toward basic and acidic residues. A compositionally biased stretch (polar residues) spans 487–497 (IHWTSSSQNHY). Residues 561–577 (GATSTGGASPTSGTNSP) show a composition bias toward low complexity.

It is found in the nucleus. The protein localises to the cytoplasm. Transcriptional repressor which interacts with the promoter region of target genes. Has a specific role in developmental timing where it regulates temporal expression of a number of miRNAs and mRNAs. Controls temporal cell fate transition during embryonic and early larval development by restricting the expression of specific miRNAs, including let-7, miR-48, lin-4, miR-35 and miR-58. Restricts the accumulation of lin-29 in the hypodermis to the larval L4 stage, thus controlling terminal differentiation of seam cells. Has a role in the miRNA-mediated specification of asymmetric gene expression patterns in gustatory neurons. May also regulate genes involved in other biological processes including transport, small molecule metabolism, and growth. Inhibits dauer formation, by antagonizing daf-12. In terms of biological role, specifically required for maintaining the timing of larval development and molting cycle rhythms. In Caenorhabditis elegans, this protein is Period protein homolog lin-42.